We begin with the raw amino-acid sequence, 117 residues long: Large ribosomal subunit protein bL20 (117 aa).

It belongs to the bacterial ribosomal protein bL20 family.

Its function is as follows. Binds directly to 23S ribosomal RNA and is necessary for the in vitro assembly process of the 50S ribosomal subunit. It is not involved in the protein synthesizing functions of that subunit. In Aliivibrio salmonicida (strain LFI1238) (Vibrio salmonicida (strain LFI1238)), this protein is Large ribosomal subunit protein bL20.